Consider the following 481-residue polypeptide: 3-isopropylmalate dehydratase large subunit (481 aa).

Positions 357, 417, and 420 each coordinate [4Fe-4S] cluster.

It belongs to the aconitase/IPM isomerase family. LeuC type 1 subfamily. Heterodimer of LeuC and LeuD. It depends on [4Fe-4S] cluster as a cofactor.

It carries out the reaction (2R,3S)-3-isopropylmalate = (2S)-2-isopropylmalate. It functions in the pathway amino-acid biosynthesis; L-leucine biosynthesis; L-leucine from 3-methyl-2-oxobutanoate: step 2/4. In terms of biological role, catalyzes the isomerization between 2-isopropylmalate and 3-isopropylmalate, via the formation of 2-isopropylmaleate. The chain is 3-isopropylmalate dehydratase large subunit from Maricaulis maris (strain MCS10) (Caulobacter maris).